The sequence spans 226 residues: 3-dehydroquinate dehydratase (226 aa).

3-dehydroquinate contacts are provided by residues 29–31 (EFR) and R56. H120 (proton donor/acceptor) is an active-site residue. K146 functions as the Schiff-base intermediate with substrate in the catalytic mechanism. Positions 187, 208, and 212 each coordinate 3-dehydroquinate.

The protein belongs to the type-I 3-dehydroquinase family. Homodimer.

The catalysed reaction is 3-dehydroquinate = 3-dehydroshikimate + H2O. The protein operates within metabolic intermediate biosynthesis; chorismate biosynthesis; chorismate from D-erythrose 4-phosphate and phosphoenolpyruvate: step 3/7. Its function is as follows. Involved in the third step of the chorismate pathway, which leads to the biosynthesis of aromatic amino acids. Catalyzes the cis-dehydration of 3-dehydroquinate (DHQ) and introduces the first double bond of the aromatic ring to yield 3-dehydroshikimate. This chain is 3-dehydroquinate dehydratase, found in Halobacterium salinarum (strain ATCC 700922 / JCM 11081 / NRC-1) (Halobacterium halobium).